Consider the following 347-residue polypeptide: Elongation factor Ts (347 aa).

Positions 80-83 (TDFV) are involved in Mg(2+) ion dislocation from EF-Tu.

This sequence belongs to the EF-Ts family.

The protein localises to the cytoplasm. Its function is as follows. Associates with the EF-Tu.GDP complex and induces the exchange of GDP to GTP. It remains bound to the aminoacyl-tRNA.EF-Tu.GTP complex up to the GTP hydrolysis stage on the ribosome. The sequence is that of Elongation factor Ts from Streptococcus gordonii (strain Challis / ATCC 35105 / BCRC 15272 / CH1 / DL1 / V288).